The chain runs to 773 residues: MKLSVLSVLLVSVAQAAAAPWRPREPRAAGSKRLTFNETVISAALSPSSISVQWIATENDGDYVYQEEDGSIKIESIVTNRSQTIVPAEKIPADAYSYWISPDLSAVLWATNYTKQYRHSFFADYYIQDVETLETVPLVEDMVGDIQYAEWSPSGDSIAFVRGNNLWTWSDGTVTAITKDGGPDMFHGVPDWIYEEEILGDRFALWFSPDSELLAFLTFNETGVPTFTVQYFMDNQEIAPPYPRELDIRYPKVSETNPTVKLNILQLSDNTVSTIPIDVFDPSELIVGEVAWVTDTHTELAVKAFNRVQDESKVVIVETASGETKIAHERDGTDGWLDNLLSISYVGPLALGSGDASSAYYVDLSDHSGWTHLYLFSTSGGDPIPLTEGEWEVTSIVSIDQERELVYYLSTQHHSTERHLYSVSYRTFEITPLVDDTVEAYWSVSFSAKAGYYILTYAGPSVPYQELYSVNQTAPLRTLTSNAALIEKLEEYALPNISYFELEIPSGEKLNVMQRLPVGFSPDKKYPVLFTPYGGPGAQEVSKRWQSLDFNAYIASDPELEYVTWTVDNRGTGYRGREFRSLVAKQLGKLEAEDQVYAAKQAAKLDWVDSEHIAIWGWSYGGYLTGKVLETDSGAFSLGLLTAPVSDWRLYDSMYTERYMKTLSTNAEGYNTTAIRHTDGFKNVEGGFLIQHGTGDDNVHFQNAAALGDTLIGNGVTPEKMQVQWFTDSDHSIRYNGGNVFLYRQLAQRLYKEKNRAKKEQHQWSKRSQDWVV.

The N-terminal stretch at 1-18 (MKLSVLSVLLVSVAQAAA) is a signal peptide. Residues asparagine 37, asparagine 80, asparagine 112, asparagine 220, asparagine 471, and asparagine 496 are each glycosylated (N-linked (GlcNAc...) asparagine). The active-site Charge relay system is the serine 619. Residue asparagine 671 is glycosylated (N-linked (GlcNAc...) asparagine). Active-site charge relay system residues include aspartate 696 and histidine 731.

Belongs to the peptidase S9B family.

It localises to the secreted. The enzyme catalyses Release of an N-terminal dipeptide, Xaa-Yaa-|-Zaa-, from a polypeptide, preferentially when Yaa is Pro, provided Zaa is neither Pro nor hydroxyproline.. Functionally, extracellular dipeptidyl-peptidase which removes N-terminal dipeptides sequentially from polypeptides having unsubstituted N-termini provided that the penultimate residue is proline. This Emericella nidulans (strain FGSC A4 / ATCC 38163 / CBS 112.46 / NRRL 194 / M139) (Aspergillus nidulans) protein is Probable dipeptidyl peptidase 4 (dpp4).